Here is a 399-residue protein sequence, read N- to C-terminus: Nicotinate phosphoribosyltransferase (399 aa).

The residue at position 217 (histidine 217) is a Phosphohistidine; by autocatalysis.

The protein belongs to the NAPRTase family. Transiently phosphorylated on a His residue during the reaction cycle. Phosphorylation strongly increases the affinity for substrates and increases the rate of nicotinate D-ribonucleotide production. Dephosphorylation regenerates the low-affinity form of the enzyme, leading to product release.

It carries out the reaction nicotinate + 5-phospho-alpha-D-ribose 1-diphosphate + ATP + H2O = nicotinate beta-D-ribonucleotide + ADP + phosphate + diphosphate. The protein operates within cofactor biosynthesis; NAD(+) biosynthesis; nicotinate D-ribonucleotide from nicotinate: step 1/1. In terms of biological role, catalyzes the synthesis of beta-nicotinate D-ribonucleotide from nicotinate and 5-phospho-D-ribose 1-phosphate at the expense of ATP. The polypeptide is Nicotinate phosphoribosyltransferase (Burkholderia cenocepacia (strain HI2424)).